The chain runs to 379 residues: Peritrophin-48 (379 aa).

The first 20 residues, 1–20, serve as a signal peptide directing secretion; sequence MKAKTLTATLALILLAFAQA. Chitin-binding type-2 domains are found at residues 25–83 and 86–143; these read ASYC…NCFF and ANPC…NTGN. 2 disulfide bridges follow: Cys-60-Cys-73 and Cys-120-Cys-133. N-linked (GlcNAc...) asparagine glycosylation is found at Asn-150 and Asn-168. Chitin-binding type-2 domains are found at residues 151–208, 224–283, and 285–356; these read LSVC…ACSR, TSPC…RTLK, and CNRC…ACEN. Cys-185 and Cys-198 are disulfide-bonded. Residues Asn-247 and Asn-252 are each glycosylated (N-linked (GlcNAc...) asparagine). Cys-324 and Cys-337 are oxidised to a cystine. 3 N-linked (GlcNAc...) asparagine glycosylation sites follow: Asn-341, Asn-356, and Asn-373.

Post-translationally, glycosylated. Larval peritrophic membrane.

Binds chitin and may bind related oligosaccharide structures. This Chrysomya bezziana (Old world screw-worm fly) protein is Peritrophin-48.